The following is a 275-amino-acid chain: T-cell ecto-ADP-ribosyltransferase 2 (275 aa).

An N-terminal signal peptide occupies residues 1–20 (MPSNICKFFLTWWLIQQVTG). Intrachain disulfides connect Cys-41–Cys-243 and Cys-141–Cys-193. The 178-residue stretch at 61–238 (AKLKVAWEEA…IFLDSPKRKK (178 aa)) folds into the TR mART core domain. 3 residues coordinate NAD(+): Tyr-98, Arg-146, and Gln-164. Arg-146 is a catalytic residue. The active site involves Ser-167. Ser-202 serves as a coordination point for NAD(+). Position 204 is an ADP-ribosylarginine; by autocatalysis (Arg-204). Residue Glu-209 is part of the active site. Ser-246 is lipidated: GPI-anchor amidated serine. Residues 247–275 (SAGARESCVSLFLVVLPSLLVQLLCLAEP) constitute a propeptide, removed in mature form.

This sequence belongs to the Arg-specific ADP-ribosyltransferase family. As to expression, postthymic T-cells.

Its subcellular location is the cell membrane. The catalysed reaction is L-arginyl-[protein] + NAD(+) = N(omega)-(ADP-D-ribosyl)-L-arginyl-[protein] + nicotinamide + H(+). It catalyses the reaction NAD(+) + H2O = ADP-D-ribose + nicotinamide + H(+). In terms of biological role, has both NAD(+) glycohydrolase and ADP-ribosyltransferase activity (to a lesser extent). The sequence is that of T-cell ecto-ADP-ribosyltransferase 2 (Art2b) from Rattus norvegicus (Rat).